The chain runs to 189 residues: Leucine repeat adapter protein 25 (189 aa).

Phosphoserine is present on S28. Residues 54–82 (ELSRAARAPDGPRHAAGSANSGSAAGPRR) are disordered. Over residues 68-79 (AAGSANSGSAAG) the composition is skewed to low complexity. Residues 86–114 (LDSALAALRKEMVGLRQLDMSLLCQLWGL) form an LRR repeat. The tract at residues 136–175 (SSLHSDSSYPPDAGLSDDEEPPDASLPPDPPPLTVPQTHN) is disordered. Over residues 159–169 (ASLPPDPPPLT) the composition is skewed to pro residues. Position 188 is a phosphoserine (S188).

It belongs to the FAM89 family. As to quaternary structure, interacts with SKI. Interacts (via LRR repeat) with CDC42BPA (via AGC-kinase C-terminal domain), CDC42BPB (via AGC-kinase C-terminal domain) and LIMK1 (via LIM zinc-binding domains). Forms a tripartite complex with CDC42BPA, CDC42BPB and LIMK1. (Microbial infection) Interacts with mouse mammary tumor virus (MMTV) envelope glycoprotein gp70. Widely expressed. Expressed in the early postnatal brain.

Its subcellular location is the cytoplasm. The protein localises to the cell projection. It is found in the lamellipodium. The protein resides in the cell surface. Functionally, negatively regulates TGF-beta-induced signaling; in cooperation with SKI prevents the translocation of SMAD2 from the nucleus to the cytoplasm in response to TGF-beta. Acts as an adapter that mediates the specific recognition of LIMK1 by CDC42BPA and CDC42BPB in the lamellipodia. LRAP25-mediated CDC42BPA/CDC42BPB targeting to LIMK1 and the lamellipodium results in LIMK1 activation and the subsequent phosphorylation of CFL1 which is important for lamellipodial F-actin regulation. Its function is as follows. (Microbial infection) May be a receptor for mouse mammary tumor virus (MMTV). The protein is Leucine repeat adapter protein 25 of Mus musculus (Mouse).